The following is a 288-amino-acid chain: ATP synthase gamma chain (288 aa).

Belongs to the ATPase gamma chain family. In terms of assembly, F-type ATPases have 2 components, CF(1) - the catalytic core - and CF(0) - the membrane proton channel. CF(1) has five subunits: alpha(3), beta(3), gamma(1), delta(1), epsilon(1). CF(0) has three main subunits: a, b and c.

The protein localises to the cell inner membrane. Its function is as follows. Produces ATP from ADP in the presence of a proton gradient across the membrane. The gamma chain is believed to be important in regulating ATPase activity and the flow of protons through the CF(0) complex. The sequence is that of ATP synthase gamma chain from Rickettsia felis (strain ATCC VR-1525 / URRWXCal2) (Rickettsia azadi).